The chain runs to 379 residues: tRNA (guanine(26)-N(2))-dimethyltransferase (379 aa).

The disordered stretch occupies residues 1–26 (MECREITEGSTTFTAPVQDETTQFPP). A Trm1 methyltransferase domain is found at 4-369 (REITEGSTTF…APLPLIEEKI (366 aa)). Polar residues predominate over residues 8-25 (EGSTTFTAPVQDETTQFP). S-adenosyl-L-methionine contacts are provided by arginine 41, arginine 66, aspartate 82, aspartate 108, and alanine 109. Positions 237, 240, 257, and 260 each coordinate Zn(2+).

The protein belongs to the class I-like SAM-binding methyltransferase superfamily. Trm1 family.

It carries out the reaction guanosine(26) in tRNA + 2 S-adenosyl-L-methionine = N(2)-dimethylguanosine(26) in tRNA + 2 S-adenosyl-L-homocysteine + 2 H(+). Functionally, dimethylates a single guanine residue at position 26 of a number of tRNAs using S-adenosyl-L-methionine as donor of the methyl groups. This chain is tRNA (guanine(26)-N(2))-dimethyltransferase, found in Methanocorpusculum labreanum (strain ATCC 43576 / DSM 4855 / Z).